Consider the following 222-residue polypeptide: MDHSQCLVTIYALMVFLGLRIDQGGCQHYLHIRPAPSENLPLVDLIEHPDPIYDPKEKDLNETLLRTLMVGHFDPNFMATILPEERLGVEDLGELDLLLRQKPSGAMPAEIKGLEFYEGLQSKKHRLSKKLRRKLQMWLWSQTFCPVLYTWNDLGTRFWPRYVKVGSCYSKRSCSVPEGMVCKAAKSMHLTILRWRCQRRVQQKCAWITIQYPVISECKCSC.

The signal sequence occupies residues 1 to 19 (MDHSQCLVTIYALMVFLGL). A glycan (N-linked (GlcNAc...) asparagine) is linked at Asn61. 4 cysteine pairs are disulfide-bonded: Cys145–Cys182, Cys168–Cys218, Cys174–Cys220, and Cys197–Cys205.

This sequence belongs to the noggin family. Homodimer.

The protein localises to the secreted. In terms of biological role, patterns the embryo by interrupting bone morphogenetic proteins (BMP) signaling. Binds BMP-4 and BMP-2 with high affinity. Can abolish BMP-4 activity by blocking binding to cognate cell-surface receptors. Capable of inducing dorsal development in embryos. Causes dorsal mesodermal differentiation of animal cap ectoderm when coexpressed with xWNT-8 and nuclear, sequence-specific DNA-binding protein xBRA. None of these molecules causes dorsal mesoderm formation when expressed alone. The chain is Noggin (nog) from Xenopus laevis (African clawed frog).